The primary structure comprises 918 residues: Sarcosine dehydrogenase, mitochondrial (918 aa).

Residues 1 to 13 show a composition bias toward low complexity; it reads MASLSRALRVAAA. A mitochondrion-targeting transit peptide spans 1–22; sequence MASLSRALRVAAAHPRQSPTRG. Residues 1–40 are disordered; it reads MASLSRALRVAAAHPRQSPTRGMGPCNLSSAAGPTAEKSV. Lys38 is modified (N6-succinyllysine). Position 108 is a tele-8alpha-FAD histidine (His108). N6-acetyllysine; alternate is present on Lys173. At Lys173 the chain carries N6-succinyllysine; alternate. N6-succinyllysine occurs at positions 377 and 391. N6-acetyllysine is present on residues Lys559 and Lys775. The residue at position 777 (Tyr777) is a Phosphotyrosine. Residues Lys802, Lys884, and Lys904 each carry the N6-acetyllysine; alternate modification. Lys802, Lys884, and Lys904 each carry N6-succinyllysine; alternate.

The protein belongs to the GcvT family. The cofactor is FAD. Expressed in pancreas, liver and kidney.

It localises to the mitochondrion matrix. It catalyses the reaction (6S)-5,6,7,8-tetrahydrofolyl-(gamma-L-Glu)(n) + sarcosine + oxidized [electron-transfer flavoprotein] + H(+) = (6R)-5,10-methylenetetrahydrofolyl-(gamma-L-Glu)(n) + reduced [electron-transfer flavoprotein] + glycine. It functions in the pathway amine and polyamine degradation; sarcosine degradation; formaldehyde and glycine from sarcosine: step 1/1. Its function is as follows. Catalyzes the last step of the oxidative degradation of choline to glycine. Converts sarcosine into glycine. The protein is Sarcosine dehydrogenase, mitochondrial of Homo sapiens (Human).